The primary structure comprises 220 residues: V-set and transmembrane domain-containing protein 2-like protein (220 aa).

The first 24 residues, M1 to A24, serve as a signal peptide directing secretion. One can recognise an Ig-like domain in the interval A41–L158. A disulfide bridge connects residues C62 and C142. Residues P165–E180 show a composition bias toward pro residues. The interval P165–S220 is disordered.

The chain is V-set and transmembrane domain-containing protein 2-like protein (Vstm2l) from Mus musculus (Mouse).